The chain runs to 141 residues: MVKRGRFALCLAVLLGACSFSSIPNGTYRATYQDFDENGWKDFLEVTFDGGKMVQVVYDYQHKEGRFKSQDADYHRVMYASSGIGPEKAFRELADALLEKGNPEMVDVVTGATVSSQSFRRLGRALLQSARRGEKEAIISR.

The signal sequence occupies residues 1–17 (MVKRGRFALCLAVLLGA). Cys-18 carries the N-palmitoyl cysteine lipid modification. Cys-18 is lipidated: S-diacylglycerol cysteine.

It is found in the cell membrane. The polypeptide is 15 kDa lipoprotein (tpp15) (Treponema pallidum (strain Nichols)).